A 296-amino-acid polypeptide reads, in one-letter code: (3R)-3-[(carboxymethyl)amino]fatty acid oxygenase/decarboxylase (296 aa).

Residues Tyr-66, Tyr-71, and Gly-98 each coordinate (3R)-3-[(carboxymethyl)amino]butanoate. Residues Tyr-66, Tyr-71, and Gly-98 each coordinate (3R)-3-{[carboxy(hydroxy)methyl]amino}butanoate. 2 residues coordinate Fe(2+): His-102 and Asp-104. (3R)-3-[(carboxymethyl)amino]butanoate-binding residues include Tyr-105 and Lys-163. 2 residues coordinate (3R)-3-{[carboxy(hydroxy)methyl]amino}butanoate: Tyr-105 and Lys-163. Fe(2+) is bound at residue His-265. His-269 serves as a coordination point for 2-oxoglutarate. Arg-280 is a binding site for (3R)-3-[(carboxymethyl)amino]butanoate. Residue Arg-280 participates in (3R)-3-{[carboxy(hydroxy)methyl]amino}butanoate binding.

The protein belongs to the TfdA dioxygenase family. Requires Fe(2+) as cofactor.

It carries out the reaction a (3R)-3-[(carboxymethyl)amino]fatty acid + 2 2-oxoglutarate + 2 O2 = a (3R)-3-isocyanyl-fatty acid + 2 succinate + 3 CO2 + 2 H2O. The catalysed reaction is a (3R)-3-[(carboxymethyl)amino]fatty acid + 2-oxoglutarate + O2 = a (3R)-3-{[carboxy(hydroxy)methyl]amino}fatty acid + succinate + CO2. It catalyses the reaction a (3R)-3-{[carboxy(hydroxy)methyl]amino}fatty acid + 2-oxoglutarate + O2 = a (3R)-3-isocyanyl-fatty acid + succinate + 2 CO2 + 2 H2O. The enzyme catalyses (3R)-3-[(carboxymethyl)amino]butanoate + 2 2-oxoglutarate + 2 O2 = (3R)-3-isocyanylbutanoate + 2 succinate + 3 CO2 + 2 H2O. It carries out the reaction (3R)-3-[(carboxymethyl)amino]butanoate + 2-oxoglutarate + O2 = (3R)-3-{[carboxy(hydroxy)methyl]amino}butanoate + succinate + CO2. The catalysed reaction is (3R)-3-{[carboxy(hydroxy)methyl]amino}butanoate + 2-oxoglutarate + O2 = (3R)-3-isocyanylbutanoate + succinate + 2 CO2 + 2 H2O. Functionally, involved in the biosynthesis of a unique class of isonitrile lipopeptides (INLPs). Catalyzes the conversion of (3R)-3-[(carboxymethyl)amino]fatty acids such as (3R)-3-[(carboxymethyl)amino]butanoate (CABA) to (3R)-3-isocyanylbutanoate (INBA) through an oxidative decarboxylation mechanism, thereby generating the isonitrile group of INLPs. This Streptomyces coeruleorubidus protein is (3R)-3-[(carboxymethyl)amino]fatty acid oxygenase/decarboxylase.